Reading from the N-terminus, the 287-residue chain is 4-hydroxybenzoate octaprenyltransferase (287 aa).

The next 7 helical transmembrane spans lie at 30 to 50 (ALWI…FALG), 92 to 112 (IAIA…LNGL), 133 to 153 (FFAI…PMAF), 158 to 178 (DTVP…SVAY), 207 to 227 (VLAI…LGAA), 232 to 252 (WPYW…YTLI), and 266 to 286 (HNNW…ALAV).

This sequence belongs to the UbiA prenyltransferase family. Mg(2+) is required as a cofactor.

The protein resides in the cell inner membrane. It carries out the reaction all-trans-octaprenyl diphosphate + 4-hydroxybenzoate = 4-hydroxy-3-(all-trans-octaprenyl)benzoate + diphosphate. It functions in the pathway cofactor biosynthesis; ubiquinone biosynthesis. Catalyzes the prenylation of para-hydroxybenzoate (PHB) with an all-trans polyprenyl group. Mediates the second step in the final reaction sequence of ubiquinone-8 (UQ-8) biosynthesis, which is the condensation of the polyisoprenoid side chain with PHB, generating the first membrane-bound Q intermediate 3-octaprenyl-4-hydroxybenzoate. In Burkholderia pseudomallei (strain 1106a), this protein is 4-hydroxybenzoate octaprenyltransferase.